The chain runs to 562 residues: Oxygen-dependent choline dehydrogenase (562 aa).

4-33 (DYIIIGAGSAGNVLATRLTEDPNTSVLLLE) is a binding site for FAD. The active-site Proton acceptor is the histidine 473.

Belongs to the GMC oxidoreductase family. Requires FAD as cofactor.

It localises to the cell membrane. The enzyme catalyses choline + A = betaine aldehyde + AH2. It carries out the reaction betaine aldehyde + NAD(+) + H2O = glycine betaine + NADH + 2 H(+). It functions in the pathway amine and polyamine biosynthesis; betaine biosynthesis via choline pathway; betaine aldehyde from choline (cytochrome c reductase route): step 1/1. Functionally, involved in the biosynthesis of the osmoprotectant glycine betaine. Catalyzes the oxidation of choline to betaine aldehyde and betaine aldehyde to glycine betaine at the same rate. The chain is Oxygen-dependent choline dehydrogenase from Escherichia coli O157:H7.